Reading from the N-terminus, the 509-residue chain is Lysine--tRNA ligase (509 aa).

Mg(2+)-binding residues include Glu418 and Glu425.

The protein belongs to the class-II aminoacyl-tRNA synthetase family. As to quaternary structure, homodimer. Mg(2+) is required as a cofactor.

It localises to the cytoplasm. The enzyme catalyses tRNA(Lys) + L-lysine + ATP = L-lysyl-tRNA(Lys) + AMP + diphosphate. In Acinetobacter baylyi (strain ATCC 33305 / BD413 / ADP1), this protein is Lysine--tRNA ligase (lysS).